We begin with the raw amino-acid sequence, 365 residues long: Metallophosphoesterase 1 homolog (365 aa).

The chain crosses the membrane as a helical span at residues 10–30 (PILLAIILVVYNEYFIFFIAF). Residues Asp-54, Asp-96, Asn-132, His-208, His-262, and His-264 each coordinate a divalent metal cation. Residues 319 to 339 (ILQIMVYIFGGIGIVILAFIL) form a helical membrane-spanning segment.

This sequence belongs to the metallophosphoesterase superfamily. MPPE1 family. Mn(2+) serves as cofactor.

The protein resides in the endoplasmic reticulum-Golgi intermediate compartment membrane. The protein localises to the golgi apparatus. It localises to the cis-Golgi network membrane. Metallophosphoesterase required for transport of GPI-anchor proteins from the endoplasmic reticulum to the Golgi. Acts in lipid remodeling steps of GPI-anchor maturation by mediating the removal of a side-chain ethanolamine-phosphate (EtNP) from the second Man (Man2) of the GPI intermediate, an essential step for efficient transport of GPI-anchor proteins. The polypeptide is Metallophosphoesterase 1 homolog (Caenorhabditis elegans).